We begin with the raw amino-acid sequence, 231 residues long: 2-C-methyl-D-erythritol 4-phosphate cytidylyltransferase (231 aa).

Belongs to the IspD/TarI cytidylyltransferase family. IspD subfamily.

It catalyses the reaction 2-C-methyl-D-erythritol 4-phosphate + CTP + H(+) = 4-CDP-2-C-methyl-D-erythritol + diphosphate. It functions in the pathway isoprenoid biosynthesis; isopentenyl diphosphate biosynthesis via DXP pathway; isopentenyl diphosphate from 1-deoxy-D-xylulose 5-phosphate: step 2/6. In terms of biological role, catalyzes the formation of 4-diphosphocytidyl-2-C-methyl-D-erythritol from CTP and 2-C-methyl-D-erythritol 4-phosphate (MEP). In Lysinibacillus sphaericus (strain C3-41), this protein is 2-C-methyl-D-erythritol 4-phosphate cytidylyltransferase.